Reading from the N-terminus, the 138-residue chain is Aspartate 1-decarboxylase (138 aa).

The active-site Schiff-base intermediate with substrate; via pyruvic acid is serine 25. At serine 25 the chain carries Pyruvic acid (Ser). Position 57 (threonine 57) interacts with substrate. Catalysis depends on tyrosine 58, which acts as the Proton donor. Position 73-75 (73-75 (GAA)) interacts with substrate.

Belongs to the PanD family. As to quaternary structure, heterooctamer of four alpha and four beta subunits. The cofactor is pyruvate. In terms of processing, is synthesized initially as an inactive proenzyme, which is activated by self-cleavage at a specific serine bond to produce a beta-subunit with a hydroxyl group at its C-terminus and an alpha-subunit with a pyruvoyl group at its N-terminus.

It is found in the cytoplasm. It carries out the reaction L-aspartate + H(+) = beta-alanine + CO2. The protein operates within cofactor biosynthesis; (R)-pantothenate biosynthesis; beta-alanine from L-aspartate: step 1/1. Its function is as follows. Catalyzes the pyruvoyl-dependent decarboxylation of aspartate to produce beta-alanine. The chain is Aspartate 1-decarboxylase from Renibacterium salmoninarum (strain ATCC 33209 / DSM 20767 / JCM 11484 / NBRC 15589 / NCIMB 2235).